Here is a 346-residue protein sequence, read N- to C-terminus: Dihydroorotase (346 aa).

Residues histidine 13 and histidine 15 each coordinate Zn(2+). Substrate contacts are provided by residues 15–17 and asparagine 41; that span reads HLR. Positions 99, 136, and 174 each coordinate Zn(2+). Lysine 99 carries the post-translational modification N6-carboxylysine. Histidine 136 contributes to the substrate binding site. A substrate-binding site is contributed by leucine 219. Residue aspartate 247 participates in Zn(2+) binding. The active site involves aspartate 247. The substrate site is built by histidine 251 and alanine 263.

This sequence belongs to the metallo-dependent hydrolases superfamily. DHOase family. Class II DHOase subfamily. In terms of assembly, homodimer. Zn(2+) serves as cofactor.

The enzyme catalyses (S)-dihydroorotate + H2O = N-carbamoyl-L-aspartate + H(+). It functions in the pathway pyrimidine metabolism; UMP biosynthesis via de novo pathway; (S)-dihydroorotate from bicarbonate: step 3/3. Catalyzes the reversible cyclization of carbamoyl aspartate to dihydroorotate. This is Dihydroorotase from Chelativorans sp. (strain BNC1).